We begin with the raw amino-acid sequence, 138 residues long: Large ribosomal subunit protein uL16 (138 aa).

It belongs to the universal ribosomal protein uL16 family. Part of the 50S ribosomal subunit.

Its function is as follows. Binds 23S rRNA and is also seen to make contacts with the A and possibly P site tRNAs. This Ureaplasma parvum serovar 3 (strain ATCC 27815 / 27 / NCTC 11736) protein is Large ribosomal subunit protein uL16.